The sequence spans 373 residues: Leucine aminopeptidase 1 (373 aa).

The first 18 residues, 1-18, serve as a signal peptide directing secretion; it reads MKLLSVLALSATATSVLG. Residue Asn-136 is glycosylated (N-linked (GlcNAc...) asparagine). The Zn(2+) site is built by His-176 and Asp-195. N-linked (GlcNAc...) asparagine glycosylation is present at Asn-196. 2 residues coordinate Zn(2+): Glu-234 and Asp-261. An N-linked (GlcNAc...) asparagine glycan is attached at Asn-284. The cysteines at positions 310 and 314 are disulfide-linked. His-343 contacts Zn(2+).

It belongs to the peptidase M28 family. M28E subfamily. Monomer. Zn(2+) is required as a cofactor.

It localises to the secreted. Extracellular aminopeptidase which contributes to pathogenicity. The sequence is that of Leucine aminopeptidase 1 (LAP1) from Trichophyton equinum (Horse ringworm fungus).